The sequence spans 216 residues: Thiamine-phosphate synthase (216 aa).

Residues 39-43 and asparagine 71 each bind 4-amino-2-methyl-5-(diphosphooxymethyl)pyrimidine; that span reads QLRRK. Positions 72 and 91 each coordinate Mg(2+). A 4-amino-2-methyl-5-(diphosphooxymethyl)pyrimidine-binding site is contributed by serine 109. 136–138 contributes to the 2-[(2R,5Z)-2-carboxy-4-methylthiazol-5(2H)-ylidene]ethyl phosphate binding site; sequence SPT. Lysine 139 contributes to the 4-amino-2-methyl-5-(diphosphooxymethyl)pyrimidine binding site. 2-[(2R,5Z)-2-carboxy-4-methylthiazol-5(2H)-ylidene]ethyl phosphate contacts are provided by residues glycine 172 and 192-193; that span reads IT.

It belongs to the thiamine-phosphate synthase family. Requires Mg(2+) as cofactor.

The enzyme catalyses 2-[(2R,5Z)-2-carboxy-4-methylthiazol-5(2H)-ylidene]ethyl phosphate + 4-amino-2-methyl-5-(diphosphooxymethyl)pyrimidine + 2 H(+) = thiamine phosphate + CO2 + diphosphate. It carries out the reaction 2-(2-carboxy-4-methylthiazol-5-yl)ethyl phosphate + 4-amino-2-methyl-5-(diphosphooxymethyl)pyrimidine + 2 H(+) = thiamine phosphate + CO2 + diphosphate. The catalysed reaction is 4-methyl-5-(2-phosphooxyethyl)-thiazole + 4-amino-2-methyl-5-(diphosphooxymethyl)pyrimidine + H(+) = thiamine phosphate + diphosphate. It participates in cofactor biosynthesis; thiamine diphosphate biosynthesis; thiamine phosphate from 4-amino-2-methyl-5-diphosphomethylpyrimidine and 4-methyl-5-(2-phosphoethyl)-thiazole: step 1/1. In terms of biological role, condenses 4-methyl-5-(beta-hydroxyethyl)thiazole monophosphate (THZ-P) and 2-methyl-4-amino-5-hydroxymethyl pyrimidine pyrophosphate (HMP-PP) to form thiamine monophosphate (TMP). The sequence is that of Thiamine-phosphate synthase from Bordetella avium (strain 197N).